The sequence spans 1256 residues: Topoisomerase 1-associated factor 1 (1256 aa).

Residues 26–38 (GFIVSDEENDNLE) show a composition bias toward acidic residues. Disordered stretches follow at residues 26–58 (GFIV…VDEY), 695–725 (SKKK…RTHA), 1052–1121 (SGAE…EAFF), and 1176–1256 (SDGV…DEDE). Positions 39–53 (NENRNERDPDSRNQD) are enriched in basic and acidic residues. Basic residues predominate over residues 1060–1086 (GKARKRGNKSSSTIKKKSLQSRSRRPP). 2 stretches are compositionally biased toward basic and acidic residues: residues 1097-1110 (ELRK…FVHD) and 1179-1190 (VDTHSHQDDKSQ). The span at 1194-1204 (SENEDSSEEVS) shows a compositional bias: acidic residues. Positions 1222 to 1231 (DNNVSENYVS) are enriched in low complexity.

The protein belongs to the timeless family. Component of the fork protection complex (FPC) consisting of TOF1 and CSM3.

The protein localises to the nucleus. In terms of biological role, forms a fork protection complex (FPC) with CSM3 and which is required for chromosome segregation during meiosis and DNA damage repair. FPC coordinates leading and lagging strand synthesis and moves with the replication fork. FPC stabilizes replication forks in a configuration that is recognized by replication checkpoint sensors. This Scheffersomyces stipitis (strain ATCC 58785 / CBS 6054 / NBRC 10063 / NRRL Y-11545) (Yeast) protein is Topoisomerase 1-associated factor 1 (TOF1).